A 157-amino-acid chain; its full sequence is Transcription elongation factor GreB (157 aa).

Belongs to the GreA/GreB family. GreB subfamily.

Its function is as follows. Necessary for efficient RNA polymerase transcription elongation past template-encoded arresting sites. The arresting sites in DNA have the property of trapping a certain fraction of elongating RNA polymerases that pass through, resulting in locked ternary complexes. Cleavage of the nascent transcript by cleavage factors such as GreA or GreB allows the resumption of elongation from the new 3'terminus. GreB releases sequences of up to 9 nucleotides in length. This Salmonella typhimurium (strain LT2 / SGSC1412 / ATCC 700720) protein is Transcription elongation factor GreB.